A 257-amino-acid chain; its full sequence is Aspartate/glutamate leucyltransferase (257 aa).

It belongs to the R-transferase family. Bpt subfamily.

It is found in the cytoplasm. It catalyses the reaction N-terminal L-glutamyl-[protein] + L-leucyl-tRNA(Leu) = N-terminal L-leucyl-L-glutamyl-[protein] + tRNA(Leu) + H(+). It carries out the reaction N-terminal L-aspartyl-[protein] + L-leucyl-tRNA(Leu) = N-terminal L-leucyl-L-aspartyl-[protein] + tRNA(Leu) + H(+). Its function is as follows. Functions in the N-end rule pathway of protein degradation where it conjugates Leu from its aminoacyl-tRNA to the N-termini of proteins containing an N-terminal aspartate or glutamate. The protein is Aspartate/glutamate leucyltransferase of Rhodopseudomonas palustris (strain HaA2).